The primary structure comprises 266 residues: Energy-coupling factor transporter transmembrane protein EcfT (266 aa).

The next 5 membrane-spanning stretches (helical) occupy residues 32–52 (IIVV…AFTV), 71–91 (PLLW…PAGG), 107–127 (LINA…STLL), 152–172 (VPVD…PTLM), and 246–266 (DTVT…FRHW).

The protein belongs to the energy-coupling factor EcfT family. As to quaternary structure, forms a stable energy-coupling factor (ECF) transporter complex composed of 2 membrane-embedded substrate-binding proteins (S component), 2 ATP-binding proteins (A component) and 2 transmembrane proteins (T component). May be able to interact with more than 1 S component at a time.

The protein localises to the cell membrane. Functionally, transmembrane (T) component of an energy-coupling factor (ECF) ABC-transporter complex. Unlike classic ABC transporters this ECF transporter provides the energy necessary to transport a number of different substrates. The chain is Energy-coupling factor transporter transmembrane protein EcfT from Levilactobacillus brevis (strain ATCC 367 / BCRC 12310 / CIP 105137 / JCM 1170 / LMG 11437 / NCIMB 947 / NCTC 947) (Lactobacillus brevis).